The primary structure comprises 1487 residues: Chromosome partition protein MukB (1487 aa).

Position 34–41 (34–41) interacts with ATP; the sequence is GGNGAGKS. Coiled-coil stretches lie at residues 297 to 426, 460 to 666, 781 to 806, 836 to 1111, and 1210 to 1266; these read SSRE…LEKA, ALKH…RLAS, RAAREQRLELLRSEREEVVEKHAKAA, EQAL…RTFV, and VEAI…LSNI. Positions 667 to 784 are flexible hinge; the sequence is PGGSNDPRLK…VIPLFGRAAR (118 aa).

It belongs to the SMC family. MukB subfamily. Homodimerization via its hinge domain. Binds to DNA via its C-terminal region. Interacts, and probably forms a ternary complex, with MukE and MukF via its C-terminal region. The complex formation is stimulated by calcium or magnesium. Interacts with tubulin-related protein FtsZ.

The protein localises to the cytoplasm. The protein resides in the nucleoid. Functionally, plays a central role in chromosome condensation, segregation and cell cycle progression. Functions as a homodimer, which is essential for chromosome partition. Involved in negative DNA supercoiling in vivo, and by this means organize and compact chromosomes. May achieve or facilitate chromosome segregation by condensation DNA from both sides of a centrally located replisome during cell division. The polypeptide is Chromosome partition protein MukB (Vibrio vulnificus (strain CMCP6)).